We begin with the raw amino-acid sequence, 252 residues long: Major prion protein (252 aa).

Positions 1–22 (MANLGCWMLVLFVATWSDLGLC) are cleaved as a signal peptide. An interaction with ADGRG6 region spans residues 23–38 (KKRPKPGGWNTGGSRY). Residues 23–229 (KKRPKPGGWN…ESQAYYQRGS (207 aa)) are interaction with GRB2, ERI3 and SYN1. The tract at residues 26–106 (PKPGGWNTGG…QWNKPSKPKT (81 aa)) is disordered. 5 repeat units span residues 51–58 (PQGGGWGQ), 59–66 (PHGGGWGQ), 67–74 (PHGGGWGQ), 75–82 (PHGGSWGQ), and 83–90 (PHGGGWGQ). Positions 51-90 (PQGGGWGQPHGGGWGQPHGGGWGQPHGGSWGQPHGGGWGQ) are 5 X 8 AA tandem repeats of P-H-G-G-G-W-G-Q. A compositionally biased stretch (gly residues) spans 52-94 (QGGGWGQPHGGGWGQPHGGGWGQPHGGSWGQPHGGGWGQGGGT). Positions 60, 61, 62, 68, 69, 70, 76, 77, 78, 84, 85, and 86 each coordinate Cu(2+). The cysteines at positions 178 and 213 are disulfide-linked. Residues N180 and N196 are each glycosylated (N-linked (GlcNAc...) asparagine). Residue S229 is the site of GPI-anchor amidated serine attachment. Residues 230–252 (SMVLFSSPPVILLISFLIFLIVG) constitute a propeptide, removed in mature form.

Belongs to the prion family. In terms of assembly, monomer and homodimer. Has a tendency to aggregate into amyloid fibrils containing a cross-beta spine, formed by a steric zipper of superposed beta-strands. Soluble oligomers may represent an intermediate stage on the path to fibril formation. Copper binding may promote oligomerization. Interacts with GRB2, APP, ERI3/PRNPIP and SYN1. Mislocalized cytosolically exposed PrP interacts with MGRN1; this interaction alters MGRN1 subcellular location and causes lysosomal enlargement. Interacts with APP. Interacts with KIAA1191. Interacts with ADGRG6.

It is found in the cell membrane. The protein resides in the golgi apparatus. In terms of biological role, its primary physiological function is unclear. May play a role in neuronal development and synaptic plasticity. May be required for neuronal myelin sheath maintenance. May promote myelin homeostasis through acting as an agonist for ADGRG6 receptor. May play a role in iron uptake and iron homeostasis. Soluble oligomers are toxic to cultured neuroblastoma cells and induce apoptosis (in vitro). Association with GPC1 (via its heparan sulfate chains) targets PRNP to lipid rafts. Also provides Cu(2+) or Zn(2+) for the ascorbate-mediated GPC1 deaminase degradation of its heparan sulfate side chains. The polypeptide is Major prion protein (PRNP) (Sapajus apella (Brown-capped capuchin)).